A 72-amino-acid polypeptide reads, in one-letter code: Small, acid-soluble spore protein C (72 aa).

The protein belongs to the alpha/beta-type SASP family.

SASP are bound to spore DNA. They are double-stranded DNA-binding proteins that cause DNA to change to an a-like conformation. They protect the DNA backbone from chemical and enzymatic cleavage and are thus involved in dormant spore's high resistance to UV light. This Bacillus subtilis (strain 168) protein is Small, acid-soluble spore protein C (sspC).